A 51-amino-acid polypeptide reads, in one-letter code: Protein 1.4 (51 aa).

The signal sequence occupies residues 1–23 (MFKKVGKFLAALAAILTLAYILA). Residues 28 to 48 (VALVVVGACYLAAVCACVWSI) traverse the membrane as a helical segment.

Its subcellular location is the host membrane. The protein is Protein 1.4 of Escherichia coli (Bacteriophage T7).